We begin with the raw amino-acid sequence, 534 residues long: Low affinity inorganic phosphate transporter 1 (534 aa).

Topologically, residues 1–23 (MAKDLQVLTALDVAKTQLYHFTA) are cytoplasmic. Residues 24–44 (IVIAGMGFFTDAYDLFCISLV) traverse the membrane as a helical segment. Residues 45 to 69 (TKLLGRIYYHHEGALKPGSLPPNVA) lie on the Extracellular side of the membrane. A helical transmembrane segment spans residues 70–90 (AAVNGVAFCGTLAGQLFFGWL). The Cytoplasmic portion of the chain corresponds to 91–98 (GDKLGRKK). A helical transmembrane segment spans residues 99–119 (VYGMTLMLMVICSIASGLSFG). Over 120 to 124 (HTPKS) the chain is Extracellular. Residues 125-145 (VMATLCFFRFWLGFGIGGDYP) form a helical membrane-spanning segment. The Cytoplasmic segment spans residues 146-163 (LSATIMSEYANKKTRGAF). The helical transmembrane segment at 164–184 (IAAVFAMQGFGILAGGMVAII) threads the bilayer. The Extracellular segment spans residues 185 to 210 (VSAAFKNQFPAPAYKDGALASTISQA). Residues 211–231 (DFVWRIIVMFGAIPTALTYYW) traverse the membrane as a helical segment. Residues 232–290 (RMKMPETARYTALVAKNLKQATNDMSKVLQVEIEPEQEKVEEISQGNDFGLFTKQFLRR) lie on the Cytoplasmic side of the membrane. Residues 291-311 (HGLHLLGTASTWFLLDIAFYS) form a helical membrane-spanning segment. Topologically, residues 312–343 (QNLFQKDIFSAIGWIPPAETMNALEEVYRIAR) are extracellular. Residues 344–364 (AQTLIALCSTVPGYWFTVAFI) traverse the membrane as a helical segment. At 365 to 369 (DKIGR) the chain is on the cytoplasmic side. The chain crosses the membrane as a helical span at residues 370 to 390 (FAIQLMGFFFMTVFMFALAIP). Topologically, residues 391 to 400 (YTHWTHKDNR) are extracellular. The chain crosses the membrane as a helical span at residues 401–421 (IGFVIMYSLTFFFANFGPNAT). Topologically, residues 422–440 (TFVVPAEIFPARLRSTCHG) are cytoplasmic. Residues 441 to 461 (ISAAAGKAGAMVGAFGFLYAA) form a helical membrane-spanning segment. Over 462–481 (QSTDPKKTDAGYPAGIGVRN) the chain is Extracellular. The helical transmembrane segment at 482-502 (SLIVLGCVNFLGMLFTLLVPE) threads the bilayer. Residues 503-534 (SKGKSLEEMSRENEGEDENGTEMRASGRTVPV) lie on the Cytoplasmic side of the membrane. The segment at 507–534 (SLEEMSRENEGEDENGTEMRASGRTVPV) is disordered.

This sequence belongs to the major facilitator superfamily. Phosphate:H(+) symporter (TC 2.A.1.9) family.

Its subcellular location is the cell membrane. It catalyses the reaction phosphate(in) + H(+)(in) = phosphate(out) + H(+)(out). Its function is as follows. Low-affinity transporter for external inorganic phosphate (Pi). Involved in phosphorus (P) remobilization from dying to developing tissues during corolla senescence in an ethylene-dependent manner. In Petunia hybrida (Petunia), this protein is Low affinity inorganic phosphate transporter 1.